Reading from the N-terminus, the 445-residue chain is Exodeoxyribonuclease 7 large subunit (445 aa).

This sequence belongs to the XseA family. As to quaternary structure, heterooligomer composed of large and small subunits.

The protein resides in the cytoplasm. It carries out the reaction Exonucleolytic cleavage in either 5'- to 3'- or 3'- to 5'-direction to yield nucleoside 5'-phosphates.. Its function is as follows. Bidirectionally degrades single-stranded DNA into large acid-insoluble oligonucleotides, which are then degraded further into small acid-soluble oligonucleotides. In Staphylococcus aureus (strain bovine RF122 / ET3-1), this protein is Exodeoxyribonuclease 7 large subunit.